A 250-amino-acid polypeptide reads, in one-letter code: Testis-expressed protein 101 (250 aa).

The N-terminal stretch at Met1–Asn25 is a signal peptide. N-linked (GlcNAc...) asparagine glycosylation is found at Asn45, Asn110, Asn134, and Asn160. Residues Cys141–Phe215 enclose the UPAR/Ly6 domain. Gly224 is lipidated: GPI-anchor amidated glycine. A propeptide spans Ala225–Pro250 (removed in mature form).

Interacts with VAMP3. Interacts with LY6K. Interacts with DPEP3; co-localized on the cell surface of spermatocytes, spermatids, and testicular spermatozoa, co-localized only in cytoplasmic droplets of caput and corpus epididymal sperm. Interacts with ADAM3; co-localized on sperm surface. Interacts with ADAM5. In terms of processing, N-glycosylated; by high mannose and/or biantennary complex and/or certain types of hybrid oligosaccharides; possesses different oligosaccharides chains according to its subcellular localization in the testis. Sheds from membrane raft by ACE and released from the cell surface of epididymal sperm while it passes through the caput epididymis leading to disappearance of TEX101 on spermatozoa; is essential to produce fertile spermatozoa. In terms of tissue distribution, detected in testis and ovary. Expressed in spermatocytes, spermatids and testicular spermatozoa, but not in spermatogonia or interstitial cells. Expressed abundantly in testicular germ cells (TGCs) but mostly disappeared from epididymal spermatozoa.

The protein resides in the cell membrane. It is found in the membrane raft. Its subcellular location is the cytoplasmic vesicle. It localises to the secretory vesicle. The protein localises to the acrosome. The protein resides in the secreted. Plays a role in fertilization by controlling binding of sperm to zona pellucida and migration of spermatozoa into the oviduct probably through molecule adhesion ADAM3. May play a role in signal transduction and promote protein tyrosine phosphorylation. The polypeptide is Testis-expressed protein 101 (Mus musculus (Mouse)).